A 129-amino-acid polypeptide reads, in one-letter code: Arsenate-mycothiol transferase ArsC2 (129 aa).

Belongs to the low molecular weight phosphotyrosine protein phosphatase family.

The protein resides in the cytoplasm. The enzyme catalyses mycothiol + arsenate = arseno-mycothiol + H2O. Functionally, involved in defense against toxic arsenate. Involved in the mycothiol/myoredoxin redox pathway which uses a mycothioltransferase mechanism; facilitates adduct formation between arsenate and mycothiol. The chain is Arsenate-mycothiol transferase ArsC2 (arsC2) from Corynebacterium glutamicum (strain ATCC 13032 / K051).